Here is a 126-residue protein sequence, read N- to C-terminus: Prefoldin subunit beta (126 aa).

The protein belongs to the prefoldin subunit beta family. Heterohexamer of two alpha and four beta subunits.

It is found in the cytoplasm. In terms of biological role, molecular chaperone capable of stabilizing a range of proteins. Seems to fulfill an ATP-independent, HSP70-like function in archaeal de novo protein folding. This Pyrobaculum neutrophilum (strain DSM 2338 / JCM 9278 / NBRC 100436 / V24Sta) (Thermoproteus neutrophilus) protein is Prefoldin subunit beta.